Here is a 267-residue protein sequence, read N- to C-terminus: Putative metal-binding protein TM_0123 (267 aa).

Residues 1 to 15 form the signal peptide; it reads MKKILLLLVLIVAVL. A divalent metal cation-binding residues include histidine 53, histidine 107, and histidine 172.

It belongs to the bacterial solute-binding protein 9 family.

It is found in the periplasm. In terms of biological role, part of an ATP-binding cassette (ABC) transport system involved in metal import. Binds a metal with high affinity and specificity and delivers it to the membrane permease for translocation into the cytoplasm. The polypeptide is Putative metal-binding protein TM_0123 (Thermotoga maritima (strain ATCC 43589 / DSM 3109 / JCM 10099 / NBRC 100826 / MSB8)).